Reading from the N-terminus, the 419-residue chain is Tryptophan synthase beta chain (419 aa).

Residue lysine 98 is modified to N6-(pyridoxal phosphate)lysine.

It belongs to the TrpB family. Tetramer of two alpha and two beta chains. Requires pyridoxal 5'-phosphate as cofactor.

It catalyses the reaction (1S,2R)-1-C-(indol-3-yl)glycerol 3-phosphate + L-serine = D-glyceraldehyde 3-phosphate + L-tryptophan + H2O. It functions in the pathway amino-acid biosynthesis; L-tryptophan biosynthesis; L-tryptophan from chorismate: step 5/5. The beta subunit is responsible for the synthesis of L-tryptophan from indole and L-serine. The protein is Tryptophan synthase beta chain of Ruegeria sp. (strain TM1040) (Silicibacter sp.).